The following is a 98-amino-acid chain: uncharacterized protein (98 aa).

Positions alanine 53–valine 98 are disordered.

This is an uncharacterized protein from Mycolicibacterium smegmatis (strain ATCC 700084 / mc(2)155) (Mycobacterium smegmatis).